The following is a 286-amino-acid chain: ATP synthase gamma chain (286 aa).

The protein belongs to the ATPase gamma chain family. In terms of assembly, F-type ATPases have 2 components, CF(1) - the catalytic core - and CF(0) - the membrane proton channel. CF(1) has five subunits: alpha(3), beta(3), gamma(1), delta(1), epsilon(1). CF(0) has three main subunits: a, b and c.

The protein resides in the cell membrane. Its function is as follows. Produces ATP from ADP in the presence of a proton gradient across the membrane. The gamma chain is believed to be important in regulating ATPase activity and the flow of protons through the CF(0) complex. This Ureaplasma parvum serovar 3 (strain ATCC 27815 / 27 / NCTC 11736) protein is ATP synthase gamma chain.